Here is a 210-residue protein sequence, read N- to C-terminus: Orotate phosphoribosyltransferase (210 aa).

5-phospho-alpha-D-ribose 1-diphosphate-binding positions include Arg94, Lys98, His100, and 120–128 (EDLISTGGS). Position 124 (Ser124) interacts with orotate.

The protein belongs to the purine/pyrimidine phosphoribosyltransferase family. PyrE subfamily. As to quaternary structure, homodimer. Mg(2+) serves as cofactor.

The enzyme catalyses orotidine 5'-phosphate + diphosphate = orotate + 5-phospho-alpha-D-ribose 1-diphosphate. It functions in the pathway pyrimidine metabolism; UMP biosynthesis via de novo pathway; UMP from orotate: step 1/2. In terms of biological role, catalyzes the transfer of a ribosyl phosphate group from 5-phosphoribose 1-diphosphate to orotate, leading to the formation of orotidine monophosphate (OMP). This Bacillus cereus (strain G9842) protein is Orotate phosphoribosyltransferase.